Here is a 208-residue protein sequence, read N- to C-terminus: Holliday junction resolvase RecU (208 aa).

Mg(2+)-binding residues include Thr86, Asp88, Glu101, and Gln120.

It belongs to the RecU family. It depends on Mg(2+) as a cofactor.

The protein localises to the cytoplasm. The enzyme catalyses Endonucleolytic cleavage at a junction such as a reciprocal single-stranded crossover between two homologous DNA duplexes (Holliday junction).. Its function is as follows. Endonuclease that resolves Holliday junction intermediates in genetic recombination. Cleaves mobile four-strand junctions by introducing symmetrical nicks in paired strands. Promotes annealing of linear ssDNA with homologous dsDNA. Required for DNA repair, homologous recombination and chromosome segregation. This chain is Holliday junction resolvase RecU, found in Lacticaseibacillus casei (strain BL23) (Lactobacillus casei).